Here is a 457-residue protein sequence, read N- to C-terminus: Cysteine--tRNA ligase (457 aa).

A Zn(2+)-binding site is contributed by C27. Positions I29–H39 match the 'HIGH' region motif. The Zn(2+) site is built by C207, H232, and E236. The short motif at K265 to S269 is the 'KMSKS' region element. K268 is an ATP binding site.

Belongs to the class-I aminoacyl-tRNA synthetase family. Monomer. Zn(2+) serves as cofactor.

The protein resides in the cytoplasm. It catalyses the reaction tRNA(Cys) + L-cysteine + ATP = L-cysteinyl-tRNA(Cys) + AMP + diphosphate. The polypeptide is Cysteine--tRNA ligase (Dehalococcoides mccartyi (strain ATCC BAA-2100 / JCM 16839 / KCTC 5957 / BAV1)).